Consider the following 266-residue polypeptide: Putative deoxyribonuclease tatdn3 (266 aa).

Zn(2+) contacts are provided by H9, H11, E103, H143, H166, and D214.

Belongs to the metallo-dependent hydrolases superfamily. TatD-type hydrolase family. Mn(2+) serves as cofactor. It depends on Ca(2+) as a cofactor. Mg(2+) is required as a cofactor. Requires Zn(2+) as cofactor.

Its subcellular location is the nucleus. Its activity is regulated as follows. The 3'-exonuclease activity is sensitive to the metal ion present in the active site, whereas the AP endodeoxyribonuclease activity is observed in a variety of divalent metal cofactors. 3'-exoxonuclease activity is suppressed in the presence of Ca(2+), Zn(2+) and Ni(2+). Functionally, exhibits 3'-exonuclease activities and apurinic/apyrimidinic (AP) endonuclease (in vitro). Show preferential AP endonuclease activity on double-stranded DNA substrates and 3'- exonuclease activity on single-stranded DNA. The sequence is that of Putative deoxyribonuclease tatdn3 (tatdn3) from Danio rerio (Zebrafish).